The following is a 605-amino-acid chain: Protein kinase wis1 (605 aa).

Over residues 1 to 20 (MSSPNNQPLSCSLRQLSISP) the composition is skewed to polar residues. The interval 1 to 141 (MSSPNNQPLS…TPPGPFPGGL (141 aa)) is disordered. Composition is skewed to low complexity over residues 31–73 (GSLL…SSPS) and 90–105 (RLGR…SLNL). Residues 106 to 115 (DMKDPSEKPR) show a composition bias toward basic and acidic residues. Phosphoserine is present on S168. A compositionally biased stretch (polar residues) spans 188-200 (SQLAGRLSNSPVK). Positions 188–263 (SQLAGRLSNS…PSSMASRRGL (76 aa)) are disordered. A compositionally biased stretch (low complexity) spans 244 to 256 (SNSNPTSPVSPSS). S253 bears the Phosphoserine mark. The Protein kinase domain occupies 320 to 579 (IIKLEELGKG…YHELANHPWL (260 aa)). Residues 326 to 334 (LGKGNYGVV) and K349 each bind ATP. The active-site Proton acceptor is the D441. Residue S469 is modified to Phosphoserine. At T473 the chain carries Phosphothreonine.

It belongs to the protein kinase superfamily. STE Ser/Thr protein kinase family. MAP kinase kinase subfamily. Post-translationally, dephosphorylated by pyp1 and pyp2.

It carries out the reaction L-seryl-[protein] + ATP = O-phospho-L-seryl-[protein] + ADP + H(+). The catalysed reaction is L-threonyl-[protein] + ATP = O-phospho-L-threonyl-[protein] + ADP + H(+). The enzyme catalyses L-tyrosyl-[protein] + ATP = O-phospho-L-tyrosyl-[protein] + ADP + H(+). Its function is as follows. Dosage-dependent regulator of mitosis with serine/ threonine protein kinase activity. May play a role in the integration of nutritional sensing with the control over entry into mitosis. It may interact with cdc25, wee1 and win1. May activate sty1. The chain is Protein kinase wis1 (wis1) from Schizosaccharomyces pombe (strain 972 / ATCC 24843) (Fission yeast).